Reading from the N-terminus, the 1159-residue chain is ABC transporter G family member 24 (1159 aa).

The next 2 membrane-spanning stretches (helical) occupy residues 11-31 and 415-435; these read FNSI…GNNC and VGSG…FLIF. Positions 454-707 constitute an ABC transporter domain; sequence LSFHNISCYV…FIKQKIAGMT (254 aa). 497–504 provides a ligand contact to ATP; it reads GLSGSGKT. The disordered stretch occupies residues 752–846; it reads QSTSPALSSN…DNNNKNNDDD (95 aa). Low complexity-rich tracts occupy residues 759 to 768 and 775 to 784; these read SSNSNNSDIN and INNPHNQNIH. Residues 785 to 795 show a composition bias toward basic residues; sequence HQQHHHHHRHI. The segment covering 822–841 has biased composition (low complexity); the sequence is DNINNNNNNNKVKNNDNNNK. The region spanning 902–1154 is the ABC transmembrane type-2 domain; it reads FLLRTTYFVH…LLAYVFLRFL (253 aa). The next 6 membrane-spanning stretches (helical) occupy residues 909 to 929, 937 to 957, 1005 to 1025, 1047 to 1067, 1074 to 1094, and 1135 to 1155; these read FVHI…PANL, FGAM…SLDL, YMIG…SLVL, ANMV…FLLA, YLIG…PVVN, and VLLG…RFLV.

This sequence belongs to the ABC transporter superfamily. ABCG family. Eye pigment precursor importer (TC 3.A.1.204) subfamily.

The protein resides in the membrane. The chain is ABC transporter G family member 24 (abcG24) from Dictyostelium discoideum (Social amoeba).